The following is a 1242-amino-acid chain: ATP-dependent helicase/nuclease subunit A (1242 aa).

Residues 12–487 (SRWTDEQWKA…IDLASNFRSR (476 aa)) form the UvrD-like helicase ATP-binding domain. Position 33–40 (33–40 (AAAGSGKT)) interacts with ATP. The 295-residue stretch at 514-808 (AAQLKYGADY…RVMTIHSSKG (295 aa)) folds into the UvrD-like helicase C-terminal domain.

The protein belongs to the helicase family. AddA subfamily. Heterodimer of AddA and AddB/RexB. It depends on Mg(2+) as a cofactor.

It catalyses the reaction Couples ATP hydrolysis with the unwinding of duplex DNA by translocating in the 3'-5' direction.. It carries out the reaction ATP + H2O = ADP + phosphate + H(+). The heterodimer acts as both an ATP-dependent DNA helicase and an ATP-dependent, dual-direction single-stranded exonuclease. Recognizes the chi site generating a DNA molecule suitable for the initiation of homologous recombination. The AddA nuclease domain is required for chi fragment generation; this subunit has the helicase and 3' -&gt; 5' nuclease activities. This is ATP-dependent helicase/nuclease subunit A from Geobacillus thermodenitrificans (strain NG80-2).